A 520-amino-acid chain; its full sequence is MLARGLPFRSALVKACPPLLNTGREGWGHHRVGTGEGAGISTRTPRPYSEIPSPGDNGWINLYHFWRKKGSQRIHFHHIENFQKYGPIYREKLGNLESVYIIHPEGVAHLFKFEGSYPQRYDIPPWLAYHRYYQKPIGVLFKKSGAWKKDRVVLNTEVMAPEAIKNFIPLLNPVSQDFVSLLHKRIKQQGSGKFVGDIKEDLFRFAFESITNVMFGERLGMLEDTVDTEAQKFIDAVYKMFHTSVPLLNLPPELYRLFRTKTWRDHVAAWDTIFNKAEKYTEIFYQDLRQKTEFRNYPGILYHLLKSEKMLLEDVKANITEMLAGGVDTTSMTLQWHLYEMARSLNVQEMLRKEVLNARRQAEGDISKMLQMVPLLKASIKETLRLHPISVTLQRYPESDLVLQDYLIPAKTLVQVAIYAMGRDPAFFSNPDKFDPTRWLGKDKDLIHFRNLGFGWGVRQCVGRRIAELEMTLFLIHILENFRVEMQQIGDVNTIFNLILTPDKPIFLVFRPFNQGPPQA.

The transit peptide at 1 to 39 (MLARGLPFRSALVKACPPLLNTGREGWGHHRVGTGEGAG) directs the protein to the mitochondrion. The segment at 27-47 (WGHHRVGTGEGAGISTRTPRP) is disordered. Cys-461 is a heme binding site.

It belongs to the cytochrome P450 family. Interacts with FDX1/adrenodoxin. It depends on heme as a cofactor.

The protein resides in the mitochondrion inner membrane. The catalysed reaction is 6 reduced [adrenodoxin] + cholesterol + 3 O2 + 6 H(+) = 4-methylpentanal + pregnenolone + 6 oxidized [adrenodoxin] + 4 H2O. The enzyme catalyses 2 reduced [adrenodoxin] + cholesterol + O2 + 2 H(+) = (22R)-hydroxycholesterol + 2 oxidized [adrenodoxin] + H2O. It catalyses the reaction (22R)-hydroxycholesterol + 2 reduced [adrenodoxin] + O2 + 2 H(+) = (20R,22R)-20,22-dihydroxycholesterol + 2 oxidized [adrenodoxin] + H2O. It carries out the reaction (20R,22R)-20,22-dihydroxycholesterol + 2 reduced [adrenodoxin] + O2 + 2 H(+) = 4-methylpentanal + pregnenolone + 2 oxidized [adrenodoxin] + 2 H2O. It participates in lipid metabolism; C21-steroid hormone metabolism. Its pathway is steroid metabolism; cholesterol metabolism. In terms of biological role, a cytochrome P450 monooxygenase that catalyzes the side-chain hydroxylation and cleavage of cholesterol to pregnenolone, the precursor of most steroid hormones. Catalyzes three sequential oxidation reactions of cholesterol, namely the hydroxylation at C22 followed with the hydroxylation at C20 to yield 20R,22R-hydroxycholesterol that is further cleaved between C20 and C22 to yield the C21-steroid pregnenolone and 4-methylpentanal. Mechanistically, uses molecular oxygen inserting one oxygen atom into a substrate and reducing the second into a water molecule. Two electrons are provided by NADPH via a two-protein mitochondrial transfer system comprising flavoprotein FDXR (adrenodoxin/ferredoxin reductase) and nonheme iron-sulfur protein FDX1 or FDX2 (adrenodoxin/ferredoxin). The protein is Cholesterol side-chain cleavage enzyme, mitochondrial of Ovis aries (Sheep).